Reading from the N-terminus, the 965-residue chain is Aminopeptidase N (965 aa).

The Cytoplasmic segment spans residues 2–8 (AKGFYIS). Residues 9-32 (KTLGILGILLGVAAVCTIIALSVV) traverse the membrane as a helical; Signal-anchor for type II membrane protein segment. A cytosolic Ser/Thr-rich junction region spans residues 33–68 (YAQEKNRNAENSAIAPTLPGSTSATTSTTNPAIDES). At 33–965 (YAQEKNRNAE…VVLKWFTENS (933 aa)) the chain is on the extracellular side. Residues 44 to 68 (SAIAPTLPGSTSATTSTTNPAIDES) are disordered. Low complexity predominate over residues 47 to 64 (APTLPGSTSATTSTTNPA). The interval 69-965 (KPWNQYRLPK…VVLKWFTENS (897 aa)) is metalloprotease. 2 N-linked (GlcNAc...) asparagine glycosylation sites follow: N114 and N128. Residue Y176 is modified to Sulfotyrosine. N-linked (GlcNAc...) asparagine glycosylation is found at N234, N242, and N264. Substrate is bound at residue 351–355 (GAMEN). Zn(2+) is bound at residue H387. Residue E388 is the Proton acceptor of the active site. Zn(2+) contacts are provided by H391 and E410. Residues N555, N606, and N624 are each glycosylated (N-linked (GlcNAc...) asparagine). C760 and C767 are joined by a disulfide. An N-linked (GlcNAc...) asparagine glycan is attached at N780. A disulfide bridge links C797 with C833. Y852 is subject to Phosphotyrosine.

The protein belongs to the peptidase M1 family. As to quaternary structure, homodimer. Interacts with SLC6A19. Zn(2+) is required as a cofactor. Sulfated. In terms of processing, N- and O-glycosylated. Post-translationally, may undergo proteolysis and give rise to a soluble form. As to expression, widely distributed throughout the CNS. Particularly abundant in kidney and intestinal microvilli, also detected in lung and liver. Weakly expressed in heart and aorta.

The protein resides in the cell membrane. It carries out the reaction Release of an N-terminal amino acid, Xaa-|-Yaa- from a peptide, amide or arylamide. Xaa is preferably Ala, but may be most amino acids including Pro (slow action). When a terminal hydrophobic residue is followed by a prolyl residue, the two may be released as an intact Xaa-Pro dipeptide.. In terms of biological role, broad specificity aminopeptidase which plays a role in the final digestion of peptides generated from hydrolysis of proteins by gastric and pancreatic proteases. Also involved in the processing of various peptides including peptide hormones, such as angiotensin III and IV, neuropeptides, and chemokines. May also be involved the cleavage of peptides bound to major histocompatibility complex class II molecules of antigen presenting cells. May have a role in angiogenesis and promote cholesterol crystallization. May have a role in amino acid transport by acting as binding partner of amino acid transporter SLC6A19 and regulating its activity. This chain is Aminopeptidase N (Anpep), found in Rattus norvegicus (Rat).